An 85-amino-acid polypeptide reads, in one-letter code: WAP four-disulfide core domain protein 12 (85 aa).

The signal sequence occupies residues 1-21; sequence MWPNSILVLMTLLISSTLVTG. One can recognise a WAP domain in the interval 25-72; that stretch reads KGEEKRVCPPDYVRCIRQDDPQCYSDNDCGDQEICCFWQCGFKCVLPV. Disulfide bonds link C32–C60, C39–C64, C47–C59, and C53–C68.

In terms of tissue distribution, constitutively expressed in tongue.

Its subcellular location is the secreted. Antibacterial protein which inhibits the growth of E.coli and S.aureus. Putative acid-stable proteinase inhibitor. This Mus musculus (Mouse) protein is WAP four-disulfide core domain protein 12.